The following is a 476-amino-acid chain: MKIMFVAAEGAPFAKTGGLGDVIGALPKSLSKKGHDVVVVMPYYDMVDQKFGDQIENLMYFYTDVGWRHQYVGVKRLSQDNVTFYFIDNQYYFYRGHVYGDWDDGERFAYFQLAALELMEKINFIPDVLHVHDYHTAMIPFLLKEKYHWIQAYNNIRTVFTIHNIEFQGQFGPEMLGDLFGVGAERYEDGTLRWNNCLNWMKAAILYSDRVTTVSPSYANEIKTPEFGKGLDQIMRMEAGKLSGIVNGIDSDLLNPETDAFLPYHFSKSNLEGKIKNKLALQENLGLPQDKNVPLIGIVSRLTDQKGFDIIASELDNMLQQDIQMVILGTGYHHFEETFSYFASRYPEKLSANITFDLRLAQQIYAASDIFMMPSAFEPCGLSQMMAMRYGSLPLVHEVGGLKDTVVAFNQFDGSGTGFSFNHFSGYWLMQTLKLALEVYNDYPEAWKKLQWQAMSKDFSWDTACVAYEQLYQQLQ.

Position 15 (lysine 15) interacts with ADP-alpha-D-glucose.

It belongs to the glycosyltransferase 1 family. Bacterial/plant glycogen synthase subfamily.

The catalysed reaction is [(1-&gt;4)-alpha-D-glucosyl](n) + ADP-alpha-D-glucose = [(1-&gt;4)-alpha-D-glucosyl](n+1) + ADP + H(+). It functions in the pathway glycan biosynthesis; glycogen biosynthesis. In terms of biological role, synthesizes alpha-1,4-glucan chains using ADP-glucose. The chain is Glycogen synthase from Streptococcus agalactiae serotype III (strain NEM316).